The primary structure comprises 351 residues: Phospho-N-acetylmuramoyl-pentapeptide-transferase (351 aa).

10 helical membrane-spanning segments follow: residues I22–W42, T65–T85, F87–I107, F128–D148, Y158–M178, G190–V210, L225–L245, V254–V274, L279–V299, and K328–I348.

The protein belongs to the glycosyltransferase 4 family. MraY subfamily. Requires Mg(2+) as cofactor.

The protein resides in the cell inner membrane. The catalysed reaction is UDP-N-acetyl-alpha-D-muramoyl-L-alanyl-gamma-D-glutamyl-meso-2,6-diaminopimeloyl-D-alanyl-D-alanine + di-trans,octa-cis-undecaprenyl phosphate = di-trans,octa-cis-undecaprenyl diphospho-N-acetyl-alpha-D-muramoyl-L-alanyl-D-glutamyl-meso-2,6-diaminopimeloyl-D-alanyl-D-alanine + UMP. It functions in the pathway cell wall biogenesis; peptidoglycan biosynthesis. Catalyzes the initial step of the lipid cycle reactions in the biosynthesis of the cell wall peptidoglycan: transfers peptidoglycan precursor phospho-MurNAc-pentapeptide from UDP-MurNAc-pentapeptide onto the lipid carrier undecaprenyl phosphate, yielding undecaprenyl-pyrophosphoryl-MurNAc-pentapeptide, known as lipid I. The chain is Phospho-N-acetylmuramoyl-pentapeptide-transferase from Nautilia profundicola (strain ATCC BAA-1463 / DSM 18972 / AmH).